The chain runs to 469 residues: Citrate synthase, mitochondrial (469 aa).

Residues 1–30 constitute a mitochondrion transit peptide; it reads MSFLSVSRLAPKLLNSKNATYFLVAARNAS. Catalysis depends on residues H304 and H350. R359 serves as a coordination point for oxaloacetate. D405 is a catalytic residue. Oxaloacetate-binding residues include R431 and R451.

The protein belongs to the citrate synthase family. In terms of assembly, homodimer.

The protein resides in the mitochondrion matrix. It carries out the reaction oxaloacetate + acetyl-CoA + H2O = citrate + CoA + H(+). Its pathway is carbohydrate metabolism; tricarboxylic acid cycle; isocitrate from oxaloacetate: step 1/2. Key enzyme of the Krebs tricarboxylic acid cycle which catalyzes the synthesis of citrate from acetyl coenzyme A and oxaloacetate. The sequence is that of Citrate synthase, mitochondrial (cs) from Thunnus albacares (Yellowfin tuna).